Consider the following 183-residue polypeptide: MTGNIAARRYARALFAIGQKQGLAELDAFGSELSAVAKAVEESPALARLFRNPLFSIEEKRAVLAKLLQAAGAGQTVSNFCNLLADKGRLADLPDINAFYSLLLDAEKGIIRGELVTAIKLAKAKRDAVKEQLEKQAGQKIELNFSVDKDILGGVVLKVGDRVLDASLRAQLGILKDNIKRGE.

This sequence belongs to the ATPase delta chain family. In terms of assembly, F-type ATPases have 2 components, F(1) - the catalytic core - and F(0) - the membrane proton channel. F(1) has five subunits: alpha(3), beta(3), gamma(1), delta(1), epsilon(1). F(0) has three main subunits: a(1), b(2) and c(10-14). The alpha and beta chains form an alternating ring which encloses part of the gamma chain. F(1) is attached to F(0) by a central stalk formed by the gamma and epsilon chains, while a peripheral stalk is formed by the delta and b chains.

The protein localises to the cell inner membrane. Its function is as follows. F(1)F(0) ATP synthase produces ATP from ADP in the presence of a proton or sodium gradient. F-type ATPases consist of two structural domains, F(1) containing the extramembraneous catalytic core and F(0) containing the membrane proton channel, linked together by a central stalk and a peripheral stalk. During catalysis, ATP synthesis in the catalytic domain of F(1) is coupled via a rotary mechanism of the central stalk subunits to proton translocation. Functionally, this protein is part of the stalk that links CF(0) to CF(1). It either transmits conformational changes from CF(0) to CF(1) or is implicated in proton conduction. The protein is ATP synthase subunit delta of Oleidesulfovibrio alaskensis (strain ATCC BAA-1058 / DSM 17464 / G20) (Desulfovibrio alaskensis).